The sequence spans 484 residues: ATP synthase subunit beta (484 aa).

169 to 176 contributes to the ATP binding site; the sequence is GGAGVGKT.

The protein belongs to the ATPase alpha/beta chains family. F-type ATPases have 2 components, CF(1) - the catalytic core - and CF(0) - the membrane proton channel. CF(1) has five subunits: alpha(3), beta(3), gamma(1), delta(1), epsilon(1). CF(0) has three main subunits: a(1), b(2) and c(9-12). The alpha and beta chains form an alternating ring which encloses part of the gamma chain. CF(1) is attached to CF(0) by a central stalk formed by the gamma and epsilon chains, while a peripheral stalk is formed by the delta and b chains.

Its subcellular location is the cell membrane. The catalysed reaction is ATP + H2O + 4 H(+)(in) = ADP + phosphate + 5 H(+)(out). Functionally, produces ATP from ADP in the presence of a proton gradient across the membrane. The catalytic sites are hosted primarily by the beta subunits. In Cutibacterium acnes (strain DSM 16379 / KPA171202) (Propionibacterium acnes), this protein is ATP synthase subunit beta.